A 165-amino-acid polypeptide reads, in one-letter code: MKTMKKYIKTAFFCSMYWLIVQLNIANLGTRIPDKYFRQKYIIFKSFNFEKHGKFWNKWFYVRKWKHKILDGHQLNQNIYDQRHLMTINTDEIEKMIIETKRAELIHWISILPVIIFNKGPRLVKYINIFYAMIANVPIIIVQRYNRPRLTQLLRILKRKGERHD.

A signal peptide spans M1–L28. A helical transmembrane segment spans residues Y126–Y145.

This sequence belongs to the acyltransferase CrtO family.

Its subcellular location is the cell membrane. It participates in carotenoid biosynthesis; staphyloxanthin biosynthesis; staphyloxanthin from farnesyl diphosphate: step 5/5. Functionally, catalyzes the acylation of glycosyl-4,4'-diaponeurosporenoate, i.e. the esterification of glucose at the C6'' position with the carboxyl group of the C(15) fatty acid 12-methyltetradecanoic acid, to yield staphyloxanthin. This is the last step in the biosynthesis of this orange pigment, present in most staphylococci strains. This is Glycosyl-4,4'-diaponeurosporenoate acyltransferase (crtO) from Staphylococcus aureus (strain Newman).